Reading from the N-terminus, the 652-residue chain is DNA polymerase epsilon subunit B (652 aa).

Belongs to the DNA polymerase epsilon subunit B family. In terms of assembly, heterotetramer. Consists of four subunits: POL2, DPB2, DPB3 and DPB4.

Its subcellular location is the nucleus. In terms of biological role, as accessory component of the DNA polymerase epsilon (DNA polymerase II) participates in chromosomal DNA replication. In Yarrowia lipolytica (strain CLIB 122 / E 150) (Yeast), this protein is DNA polymerase epsilon subunit B (DPB2).